The following is a 375-amino-acid chain: Oleosin-B6 (375 aa).

The interval 1–32 (MKEEIQNETAQTQLQREGRMFSFLFPVIEVIK) is polar. The next 3 helical transmembrane spans lie at 21 to 43 (FSFL…SVVF), 55 to 75 (AVAL…LVPA), and 81 to 101 (LLAT…GLLM). The hydrophobic stretch occupies residues 33–112 (VVMASVASVV…LIKHPGKEGA (80 aa)). Disordered regions lie at residues 144 to 284 (PGVG…SFLS) and 303 to 375 (IPGF…DESS). The segment covering 148–179 (KKSEGRGESKGKKGKKGKSEHGRGKHEGEGKS) has biased composition (basic and acidic residues). Residues 193–210 (NNPPPAGAPPTGSPPAAP) show a composition bias toward pro residues. 23 tandem repeats follow at residues 207-209 (PAA), 210-212 (PAA), 213-215 (PEA), 216-218 (PAA), 219-221 (PAA), 222-224 (PAA), 225-227 (PAA), 228-230 (PAA), 231-233 (PAA), 234-236 (PAA), 237-239 (PED), 240-242 (PAA), 243-245 (PAA), 246-248 (PEA), 249-251 (PAT), 252-254 (PAA), 255-257 (PPA), 258-260 (PAA), 261-263 (APA), 264-266 (PAA), 267-269 (PAA), 270-272 (PPA), and 273-275 (PAA). Residues 207-275 (PAAPAAPEAP…APAAPPAPAA (69 aa)) form a 23 X 3 AA approximate tandem repeats of P-A-A region. The segment covering 211–251 (AAPEAPAAPAAPAAPAAPAAPAAPAAPEDPAAPAAPEAPAT) has biased composition (low complexity). A compositionally biased stretch (pro residues) spans 252 to 280 (PAAPPAPAAAPAPAAPAAPPAPAAPPRPP). Over residues 316–331 (SKGGKKSKGKGKSNGR) the composition is skewed to basic residues.

Belongs to the oleosin family. The full-length protein is found in the tapetal lipid bodies of immature anthers, the proteolytically cleaved C-terminal product is found on the coats of pollen grains. Not found in flowers, developing embryos or leaf tissue.

The protein resides in the lipid droplet. Its subcellular location is the membrane. Many of the major pollen coat proteins are derived from endoproteolytic cleavage of oleosin-like proteins. In Brassica napus (Rape), this protein is Oleosin-B6.